We begin with the raw amino-acid sequence, 408 residues long: DNA primase DnaG (408 aa).

Residues 172–248 (DSIIIVEGRA…HVDYIARAPP (77 aa)) enclose the Toprim domain. The Mg(2+) site is built by Glu-178, Asp-222, and Asp-224. Residues 279–304 (AAGEKAETPQQPPPQQPVPQQEVREE) form a disordered region.

Belongs to the archaeal DnaG primase family. As to quaternary structure, forms a ternary complex with MCM helicase and DNA. Component of the archaeal exosome complex. Mg(2+) is required as a cofactor.

The catalysed reaction is ssDNA + n NTP = ssDNA/pppN(pN)n-1 hybrid + (n-1) diphosphate.. RNA polymerase that catalyzes the synthesis of short RNA molecules used as primers for DNA polymerase during DNA replication. Also part of the exosome, which is a complex involved in RNA degradation. Acts as a poly(A)-binding protein that enhances the interaction between heteromeric, adenine-rich transcripts and the exosome. In Pyrobaculum aerophilum (strain ATCC 51768 / DSM 7523 / JCM 9630 / CIP 104966 / NBRC 100827 / IM2), this protein is DNA primase DnaG.